The chain runs to 296 residues: Transmembrane protein 156 (296 aa).

The Cytoplasmic portion of the chain corresponds to 1–4 (MTKT). The helical transmembrane segment at 5 to 25 (ALLKLFVAIVITFILILPEYF) threads the bilayer. The Extracellular portion of the chain corresponds to 26 to 211 (KTPKERTLEL…EMDIKNITCS (186 aa)). N-linked (GlcNAc...) asparagine glycosylation is found at asparagine 45 and asparagine 156. Residues 212 to 232 (MKITWYILVLLVFIFLIILTI) traverse the membrane as a helical segment. The Cytoplasmic portion of the chain corresponds to 233-296 (RKILEGQRRV…QEVLPPIPEL (64 aa)).

The protein resides in the membrane. The sequence is that of Transmembrane protein 156 (TMEM156) from Homo sapiens (Human).